The chain runs to 432 residues: 3-phosphoshikimate 1-carboxyvinyltransferase (432 aa).

Positions 22, 23, and 27 each coordinate 3-phosphoshikimate. Lys22 contacts phosphoenolpyruvate. The phosphoenolpyruvate site is built by Gly96 and Arg127. 3-phosphoshikimate-binding residues include Ser173, Ser174, Gln175, Ser201, Asp316, Asn339, and Lys343. Gln175 serves as a coordination point for phosphoenolpyruvate. Residue Asp316 is the Proton acceptor of the active site. Positions 347, 391, and 416 each coordinate phosphoenolpyruvate.

Belongs to the EPSP synthase family. Monomer.

It localises to the cytoplasm. The catalysed reaction is 3-phosphoshikimate + phosphoenolpyruvate = 5-O-(1-carboxyvinyl)-3-phosphoshikimate + phosphate. It participates in metabolic intermediate biosynthesis; chorismate biosynthesis; chorismate from D-erythrose 4-phosphate and phosphoenolpyruvate: step 6/7. Its function is as follows. Catalyzes the transfer of the enolpyruvyl moiety of phosphoenolpyruvate (PEP) to the 5-hydroxyl of shikimate-3-phosphate (S3P) to produce enolpyruvyl shikimate-3-phosphate and inorganic phosphate. The protein is 3-phosphoshikimate 1-carboxyvinyltransferase of Haemophilus influenzae (strain PittGG).